Reading from the N-terminus, the 182-residue chain is Photosystem I assembly protein Ycf4 (182 aa).

The next 2 membrane-spanning stretches (helical) occupy residues Trp-22–Leu-42 and Phe-66–Val-86.

This sequence belongs to the Ycf4 family.

It is found in the plastid. The protein localises to the chloroplast thylakoid membrane. In terms of biological role, seems to be required for the assembly of the photosystem I complex. This is Photosystem I assembly protein Ycf4 from Tupiella akineta (Green alga).